The primary structure comprises 368 residues: tRNA 2-selenouridine synthase (368 aa).

Positions 15 to 138 constitute a Rhodanese domain; the sequence is FLNQHPIMDV…MRQYLIGVIE (124 aa). C98 (S-selanylcysteine intermediate) is an active-site residue.

The protein belongs to the SelU family. In terms of assembly, monomer.

It catalyses the reaction 5-methylaminomethyl-2-thiouridine(34) in tRNA + selenophosphate + (2E)-geranyl diphosphate + H2O + H(+) = 5-methylaminomethyl-2-selenouridine(34) in tRNA + (2E)-thiogeraniol + phosphate + diphosphate. It carries out the reaction 5-methylaminomethyl-2-thiouridine(34) in tRNA + (2E)-geranyl diphosphate = 5-methylaminomethyl-S-(2E)-geranyl-thiouridine(34) in tRNA + diphosphate. The catalysed reaction is 5-methylaminomethyl-S-(2E)-geranyl-thiouridine(34) in tRNA + selenophosphate + H(+) = 5-methylaminomethyl-2-(Se-phospho)selenouridine(34) in tRNA + (2E)-thiogeraniol. The enzyme catalyses 5-methylaminomethyl-2-(Se-phospho)selenouridine(34) in tRNA + H2O = 5-methylaminomethyl-2-selenouridine(34) in tRNA + phosphate. In terms of biological role, involved in the post-transcriptional modification of the uridine at the wobble position (U34) of tRNA(Lys), tRNA(Glu) and tRNA(Gln). Catalyzes the conversion of 2-thiouridine (S2U-RNA) to 2-selenouridine (Se2U-RNA). Acts in a two-step process involving geranylation of 2-thiouridine (S2U) to S-geranyl-2-thiouridine (geS2U) and subsequent selenation of the latter derivative to 2-selenouridine (Se2U) in the tRNA chain. This Shewanella baltica (strain OS185) protein is tRNA 2-selenouridine synthase.